Reading from the N-terminus, the 140-residue chain is Large ribosomal subunit protein bL17 (140 aa).

This sequence belongs to the bacterial ribosomal protein bL17 family. In terms of assembly, part of the 50S ribosomal subunit. Contacts protein L32.

This Gluconobacter oxydans (strain 621H) (Gluconobacter suboxydans) protein is Large ribosomal subunit protein bL17.